The following is a 117-amino-acid chain: Ribosome-binding factor A (117 aa).

Belongs to the RbfA family. Monomer. Binds 30S ribosomal subunits, but not 50S ribosomal subunits or 70S ribosomes.

The protein localises to the cytoplasm. One of several proteins that assist in the late maturation steps of the functional core of the 30S ribosomal subunit. Associates with free 30S ribosomal subunits (but not with 30S subunits that are part of 70S ribosomes or polysomes). Required for efficient processing of 16S rRNA. May interact with the 5'-terminal helix region of 16S rRNA. The polypeptide is Ribosome-binding factor A (Lactiplantibacillus plantarum (strain ATCC BAA-793 / NCIMB 8826 / WCFS1) (Lactobacillus plantarum)).